A 346-amino-acid chain; its full sequence is Heterogeneous nuclear ribonucleoprotein A2 homolog 1 (346 aa).

2 RRM domains span residues 9-92 (RKLF…ESAK) and 100-179 (KKLF…LSKQ). Disordered regions lie at residues 182-217 (QDVQ…FRGG) and 326-346 (NYGP…RNRY). Residues 193–217 (GNFGFGDSRGGGNFGSGPGGNFRGG) are compositionally biased toward gly residues. The tract at residues 297-340 (QQSSNYGPMKSGGNFGGNRSMGGGPYGGGNYGPGNASGGNGGGY) is nuclear targeting sequence.

It localises to the nucleus. Functionally, forms complexes (ribonucleosomes) with at least 20 other different hnRNP and heterogeneous nuclear RNA in the nucleus. The chain is Heterogeneous nuclear ribonucleoprotein A2 homolog 1 from Xenopus laevis (African clawed frog).